The sequence spans 306 residues: UDP-3-O-acyl-N-acetylglucosamine deacetylase (306 aa).

Residues histidine 79, histidine 238, and aspartate 242 each coordinate Zn(2+). The Proton donor role is filled by histidine 265.

It belongs to the LpxC family. Requires Zn(2+) as cofactor.

The catalysed reaction is a UDP-3-O-[(3R)-3-hydroxyacyl]-N-acetyl-alpha-D-glucosamine + H2O = a UDP-3-O-[(3R)-3-hydroxyacyl]-alpha-D-glucosamine + acetate. The protein operates within glycolipid biosynthesis; lipid IV(A) biosynthesis; lipid IV(A) from (3R)-3-hydroxytetradecanoyl-[acyl-carrier-protein] and UDP-N-acetyl-alpha-D-glucosamine: step 2/6. Functionally, catalyzes the hydrolysis of UDP-3-O-myristoyl-N-acetylglucosamine to form UDP-3-O-myristoylglucosamine and acetate, the committed step in lipid A biosynthesis. The protein is UDP-3-O-acyl-N-acetylglucosamine deacetylase of Shewanella denitrificans (strain OS217 / ATCC BAA-1090 / DSM 15013).